Reading from the N-terminus, the 102-residue chain is Monothiol glutaredoxin-S5 (102 aa).

The Glutaredoxin domain occupies 1–101; it reads MENLQKMISE…PMLKRAGALW (101 aa). Residue Cys21 coordinates [2Fe-2S] cluster. The Responsive for interaction with TGA factors motif lies at 99–102; the sequence is ALWL.

Belongs to the glutaredoxin family. CC-type subfamily.

The protein resides in the cytoplasm. The protein localises to the nucleus. May only reduce GSH-thiol disulfides, but not protein disulfides. This chain is Monothiol glutaredoxin-S5 (GRXS5), found in Arabidopsis thaliana (Mouse-ear cress).